The chain runs to 908 residues: Metabotropic glutamate receptor 8 (908 aa).

The signal sequence occupies residues 1–33 (MVCEGKRSTSCPCFFLLTAKFYWILTMMQRTHS). The Extracellular segment spans residues 34-583 (QEYAHSIRLD…IIKLEWHSPW (550 aa)). Cys64 and Cys106 are oxidised to a cystine. Asn95 carries N-linked (GlcNAc...) asparagine glycosylation. L-glutamate is bound by residues Ser156, 177–179 (AST), and Tyr227. Disulfide bonds link Cys246/Cys534, Cys369/Cys384, Cys424/Cys431, Cys516/Cys535, Cys520/Cys538, Cys541/Cys553, and Cys556/Cys569. Asn298 is a glycosylation site (N-linked (GlcNAc...) asparagine). Asp309 is an L-glutamate binding site. Lys401 serves as a coordination point for L-glutamate. N-linked (GlcNAc...) asparagine glycosylation is found at Asn452 and Asn480. N-linked (GlcNAc...) asparagine glycosylation occurs at Asn565. The chain crosses the membrane as a helical span at residues 584–608 (AVVPVFIAILGIIATTFVIVTFVRY). Topologically, residues 609–620 (NDTPIVRASGRE) are cytoplasmic. Residues 621–641 (LSYVLLTGIFLCYSITFLMIA) traverse the membrane as a helical segment. Residues 642-647 (APDTII) lie on the Extracellular side of the membrane. A helical membrane pass occupies residues 648–668 (CSFRRIFLGLGMCFSYAALLT). Topologically, residues 669 to 695 (KTNRIHRIFEQGKKSVTAPKFISPASQ) are cytoplasmic. The helical transmembrane segment at 696 to 716 (LVITFSLISVQLLGVFVWFVV) threads the bilayer. Residues 717 to 746 (DPPHTIIDYGEQRTLDPENARGVLKCDISD) are Extracellular-facing. Residues 747–768 (LSLICSLGYSILLMVTCTVYAI) traverse the membrane as a helical segment. Residues 769-781 (KTRGVPETFNEAK) lie on the Cytoplasmic side of the membrane. The chain crosses the membrane as a helical span at residues 782–803 (PIGFTMYTTCIIWLAFIPIFFG). Residues 804 to 818 (TAQSAEKMYIQTTTL) lie on the Extracellular side of the membrane. A helical transmembrane segment spans residues 819 to 843 (TVSMSLSASVSLGMLYMPKVYIIIF). Topologically, residues 844-908 (HPEQNVQKRK…TYISYSNHSI (65 aa)) are cytoplasmic. Residue Lys882 forms a Glycyl lysine isopeptide (Lys-Gly) (interchain with G-Cter in SUMO1) linkage.

Belongs to the G-protein coupled receptor 3 family. As to quaternary structure, interacts with PICK1. As to expression, strongly expressed in olfactory bulb, accessory olfactory bulb, and mammillary body. Weaker expression in the retina, and in scattered cells in the cortex and hindbrain.

Its subcellular location is the cell membrane. In terms of biological role, G-protein coupled receptor for glutamate. Ligand binding causes a conformation change that triggers signaling via guanine nucleotide-binding proteins (G proteins) and modulates the activity of down-stream effectors. Signaling inhibits adenylate cyclase activity. The sequence is that of Metabotropic glutamate receptor 8 (Grm8) from Mus musculus (Mouse).